The following is a 337-amino-acid chain: uncharacterized protein (337 aa).

The span at S42–S66 shows a compositional bias: low complexity. Residues S42–F68 are disordered. Positions F129 to V304 constitute an Exonuclease domain. Residues D133, E135, and D234 each coordinate Mg(2+). E135 (proton acceptor) is an active-site residue. AMP is bound at residue E135. H291 acts as the Proton acceptor in catalysis. H291 serves as a coordination point for AMP. D296 contacts Mg(2+).

This is an uncharacterized protein from Arabidopsis thaliana (Mouse-ear cress).